A 229-amino-acid chain; its full sequence is NAD(P)H-quinone oxidoreductase subunit K, chloroplastic (229 aa).

4 residues coordinate [4Fe-4S] cluster: Cys43, Cys44, Cys108, and Cys139.

This sequence belongs to the complex I 20 kDa subunit family. In terms of assembly, NDH is composed of at least 16 different subunits, 5 of which are encoded in the nucleus. [4Fe-4S] cluster serves as cofactor.

The protein localises to the plastid. It is found in the chloroplast thylakoid membrane. It carries out the reaction a plastoquinone + NADH + (n+1) H(+)(in) = a plastoquinol + NAD(+) + n H(+)(out). The enzyme catalyses a plastoquinone + NADPH + (n+1) H(+)(in) = a plastoquinol + NADP(+) + n H(+)(out). Functionally, NDH shuttles electrons from NAD(P)H:plastoquinone, via FMN and iron-sulfur (Fe-S) centers, to quinones in the photosynthetic chain and possibly in a chloroplast respiratory chain. The immediate electron acceptor for the enzyme in this species is believed to be plastoquinone. Couples the redox reaction to proton translocation, and thus conserves the redox energy in a proton gradient. The chain is NAD(P)H-quinone oxidoreductase subunit K, chloroplastic from Aethionema cordifolium (Lebanon stonecress).